A 244-amino-acid polypeptide reads, in one-letter code: 3-deoxy-manno-octulosonate cytidylyltransferase (244 aa).

It belongs to the KdsB family.

It is found in the cytoplasm. The catalysed reaction is 3-deoxy-alpha-D-manno-oct-2-ulosonate + CTP = CMP-3-deoxy-beta-D-manno-octulosonate + diphosphate. It functions in the pathway nucleotide-sugar biosynthesis; CMP-3-deoxy-D-manno-octulosonate biosynthesis; CMP-3-deoxy-D-manno-octulosonate from 3-deoxy-D-manno-octulosonate and CTP: step 1/1. The protein operates within bacterial outer membrane biogenesis; lipopolysaccharide biosynthesis. Functionally, activates KDO (a required 8-carbon sugar) for incorporation into bacterial lipopolysaccharide in Gram-negative bacteria. The sequence is that of 3-deoxy-manno-octulosonate cytidylyltransferase from Wolinella succinogenes (strain ATCC 29543 / DSM 1740 / CCUG 13145 / JCM 31913 / LMG 7466 / NCTC 11488 / FDC 602W) (Vibrio succinogenes).